The chain runs to 598 residues: Elongation factor 4 (598 aa).

One can recognise a tr-type G domain in the interval 4–186; the sequence is DHIRNFSIIA…AIVKRVPPPK (183 aa). GTP-binding positions include 16 to 21 and 133 to 136; these read DHGKST and NKID.

This sequence belongs to the TRAFAC class translation factor GTPase superfamily. Classic translation factor GTPase family. LepA subfamily.

It localises to the cell inner membrane. It carries out the reaction GTP + H2O = GDP + phosphate + H(+). In terms of biological role, required for accurate and efficient protein synthesis under certain stress conditions. May act as a fidelity factor of the translation reaction, by catalyzing a one-codon backward translocation of tRNAs on improperly translocated ribosomes. Back-translocation proceeds from a post-translocation (POST) complex to a pre-translocation (PRE) complex, thus giving elongation factor G a second chance to translocate the tRNAs correctly. Binds to ribosomes in a GTP-dependent manner. The chain is Elongation factor 4 from Magnetococcus marinus (strain ATCC BAA-1437 / JCM 17883 / MC-1).